The primary structure comprises 405 residues: Insertion element IS110 uncharacterized 43.6 kDa protein (405 aa).

In Streptomyces coelicolor (strain ATCC BAA-471 / A3(2) / M145), this protein is Insertion element IS110 uncharacterized 43.6 kDa protein.